The sequence spans 244 residues: Probable transcriptional regulatory protein BT0025 (244 aa).

This sequence belongs to the TACO1 family.

It localises to the cytoplasm. This Borrelia turicatae (strain 91E135) protein is Probable transcriptional regulatory protein BT0025.